The following is a 180-amino-acid chain: Negative modulator of initiation of replication (180 aa).

The tract at residues 115–119 is interaction with DNA; sequence RTRVY.

It belongs to the SeqA family. As to quaternary structure, homodimer. Polymerizes to form helical filaments.

It localises to the cytoplasm. In terms of biological role, negative regulator of replication initiation, which contributes to regulation of DNA replication and ensures that replication initiation occurs exactly once per chromosome per cell cycle. Binds to pairs of hemimethylated GATC sequences in the oriC region, thus preventing assembly of replication proteins and re-initiation at newly replicated origins. Repression is relieved when the region becomes fully methylated. This chain is Negative modulator of initiation of replication, found in Aliivibrio fischeri (strain ATCC 700601 / ES114) (Vibrio fischeri).